Reading from the N-terminus, the 37-residue chain is Large ribosomal subunit protein bL36 (37 aa).

This sequence belongs to the bacterial ribosomal protein bL36 family.

This is Large ribosomal subunit protein bL36 from Halalkalibacterium halodurans (strain ATCC BAA-125 / DSM 18197 / FERM 7344 / JCM 9153 / C-125) (Bacillus halodurans).